The primary structure comprises 344 residues: MAALPAETRPLLAVLRGERRDPPPVWLMRQAGRYLPEYRALRETKGGFLELAYDSDAAAEITLQPIRRFGFDGAILFSDILIIPHAMGQDLRFEAGEGPRLSPTLVDRTLADLEPVPARLEPIYGTVRRVRAALPAETTFLGFAGSPWTVATYMVAGQGSREQAETRRKAYRDPAGFQAIIDALVDATADYLSKQIEAGVDAVQLFDSWAGSLAPREFERWVIAPTAQLVRRLHARHPGVPVIGFPKGAGGKLPAYARETGVDAVGLDETVDPAWAHANLPEGLTVQGNLDPLALVSGGEGLDTAVDAILGAFPGRPHVFNLGHGILLDTPIAHVERLLARVRG.

Residues 29–33, aspartate 79, tyrosine 153, serine 208, and histidine 324 contribute to the substrate site; that span reads RQAGR.

It belongs to the uroporphyrinogen decarboxylase family. In terms of assembly, homodimer.

The protein resides in the cytoplasm. It carries out the reaction uroporphyrinogen III + 4 H(+) = coproporphyrinogen III + 4 CO2. It functions in the pathway porphyrin-containing compound metabolism; protoporphyrin-IX biosynthesis; coproporphyrinogen-III from 5-aminolevulinate: step 4/4. Catalyzes the decarboxylation of four acetate groups of uroporphyrinogen-III to yield coproporphyrinogen-III. This Rhizorhabdus wittichii (strain DSM 6014 / CCUG 31198 / JCM 15750 / NBRC 105917 / EY 4224 / RW1) (Sphingomonas wittichii) protein is Uroporphyrinogen decarboxylase.